The sequence spans 585 residues: YTH domain-containing family protein 3 (585 aa).

Disordered stretches follow at residues 1–52, 243–277, and 304–351; these read MSAT…YPPM, RKPAKPQPKLKPKGNVGIGGSAVPPPPIKHNMNIG, and PQPL…QQLQ. Serine 2 carries the N-acetylserine modification. The span at 15 to 24 shows a compositional bias: polar residues; sequence NKVSVQNGSI. The residue at position 23 (serine 23) is a Phosphoserine. Positions 244–254 are enriched in basic residues; the sequence is KPAKPQPKLKP. The segment covering 329-351 has biased composition (low complexity); that stretch reads QQQQGPQPQAQPHQVQPQQQQLQ. Positions 416 to 550 constitute a YTH domain; that stretch reads GRVFIIKSYS…EKAKQVLKII (135 aa). RNA is bound by residues 422–424, aspartate 428, 438–439, asparagine 468, tryptophan 492, and tryptophan 497; these read KSY and WC.

Belongs to the YTHDF family. YTHDF3 subfamily. In terms of assembly, interacts with CNOT1; promoting recruitment of the CCR4-NOT complex. Interacts with YTHDF1. Interacts with YTHDF2. Interacts with PAN3. Post-translationally, (Microbial infection) Proteolytically cleaved by HIV-1 protease when incorporated into HIV-1 particles in a nucleocapsid-dependent-manner. Cleavage by HIV-1 protease probably ensures optimal infectivity of the mature virion.

The protein localises to the cytoplasm. Its subcellular location is the cytosol. It localises to the P-body. The protein resides in the stress granule. Functionally, specifically recognizes and binds N6-methyladenosine (m6A)-containing RNAs, and regulates their stability. M6A is a modification present at internal sites of mRNAs and some non-coding RNAs and plays a role in mRNA stability and processing. Acts as a regulator of mRNA stability by promoting degradation of m6A-containing mRNAs via interaction with the CCR4-NOT complex or PAN3. The YTHDF paralogs (YTHDF1, YTHDF2 and YTHDF3) share m6A-containing mRNAs targets and act redundantly to mediate mRNA degradation and cellular differentiation. Acts as a negative regulator of type I interferon response by down-regulating interferon-stimulated genes (ISGs) expression: acts by binding to FOXO3 mRNAs. Binds to FOXO3 mRNAs independently of METTL3-mediated m6A modification. Can also act as a regulator of mRNA stability in cooperation with YTHDF2 by binding to m6A-containing mRNA and promoting their degradation. Recognizes and binds m6A-containing circular RNAs (circRNAs); circRNAs are generated through back-splicing of pre-mRNAs, a non-canonical splicing process promoted by dsRNA structures across circularizing exons. Promotes formation of phase-separated membraneless compartments, such as P-bodies or stress granules, by undergoing liquid-liquid phase separation upon binding to mRNAs containing multiple m6A-modified residues: polymethylated mRNAs act as a multivalent scaffold for the binding of YTHDF proteins, juxtaposing their disordered regions and thereby leading to phase separation. The resulting mRNA-YTHDF complexes then partition into different endogenous phase-separated membraneless compartments, such as P-bodies, stress granules or neuronal RNA granules. May also recognize and bind N1-methyladenosine (m1A)-containing mRNAs: inhibits trophoblast invasion by binding to m1A-methylated transcripts of IGF1R, promoting their degradation. Has some antiviral activity against HIV-1 virus: incorporated into HIV-1 particles in a nucleocapsid-dependent manner and reduces viral infectivity in the next cycle of infection. May interfere with this early step of the viral life cycle by binding to N6-methyladenosine (m6A) modified sites on the HIV-1 RNA genome. The chain is YTH domain-containing family protein 3 from Homo sapiens (Human).